The primary structure comprises 188 residues: dCTP deaminase (188 aa).

DCTP-binding positions include 111–116 (KSTYAR), 135–137 (TLE), Q156, Y170, K179, and Q180. E137 serves as the catalytic Proton donor/acceptor.

It belongs to the dCTP deaminase family. As to quaternary structure, homotrimer.

The enzyme catalyses dCTP + H2O + H(+) = dUTP + NH4(+). Its pathway is pyrimidine metabolism; dUMP biosynthesis; dUMP from dCTP (dUTP route): step 1/2. Its function is as follows. Catalyzes the deamination of dCTP to dUTP. This chain is dCTP deaminase, found in Rickettsia felis (strain ATCC VR-1525 / URRWXCal2) (Rickettsia azadi).